We begin with the raw amino-acid sequence, 546 residues long: Cysteine desulfurase SufS (546 aa).

A signal peptide spans 1–22 (MLRGPRCLYIYLFFVFLPFSFC). Lys-291 is modified (N6-(pyridoxal phosphate)lysine). The active-site Cysteine persulfide intermediate is Cys-497.

The protein belongs to the class-V pyridoxal-phosphate-dependent aminotransferase family. Csd subfamily. In terms of assembly, monomer. Interacts with SufE; interaction enhances cysteine desulfurase activity of SufS. Pyridoxal 5'-phosphate serves as cofactor. In terms of processing, proteolytically cleaved.

The protein localises to the plastid. It is found in the apicoplast. The catalysed reaction is (sulfur carrier)-H + L-cysteine = (sulfur carrier)-SH + L-alanine. It functions in the pathway cofactor biosynthesis; iron-sulfur cluster biosynthesis. Functionally, catalyzes sulfur activation and mobilization in sulfur mobilization (SUF) pathway for iron-sulfur (Fe-S) cluster biogenesis. Active when in complex with a partner protein SufE. Required for apicoplast maintenance. Plays a role in the development of sporozoites in oocysts in mosquitoes. May provide sulfur for MNMA-mediated tRNA modifications. The sequence is that of Cysteine desulfurase SufS from Plasmodium falciparum (isolate 3D7).